The sequence spans 392 residues: Lipid-A-disaccharide synthase (392 aa).

The protein belongs to the LpxB family.

It catalyses the reaction a lipid X + a UDP-2-N,3-O-bis[(3R)-3-hydroxyacyl]-alpha-D-glucosamine = a lipid A disaccharide + UDP + H(+). It functions in the pathway bacterial outer membrane biogenesis; LPS lipid A biosynthesis. In terms of biological role, condensation of UDP-2,3-diacylglucosamine and 2,3-diacylglucosamine-1-phosphate to form lipid A disaccharide, a precursor of lipid A, a phosphorylated glycolipid that anchors the lipopolysaccharide to the outer membrane of the cell. This is Lipid-A-disaccharide synthase from Bradyrhizobium diazoefficiens (strain JCM 10833 / BCRC 13528 / IAM 13628 / NBRC 14792 / USDA 110).